Here is a 263-residue protein sequence, read N- to C-terminus: Interleukin-33 (263 aa).

Polar residues predominate over residues 1 to 17 (MKYSTTKIPPAKMNSSA). Residues 1 to 28 (MKYSTTKIPPAKMNSSADKALVKSPKLR) are disordered. The tract at residues 1–65 (MKYSTTKIPP…CYFRKEITKR (65 aa)) is homeodomain-like HTH domain. The segment at 62-103 (ITKRYSPRTAEKCRKQCLVFTACHQQLNKDFTSDVPMLQKCF) is interaction with RELA.

It belongs to the IL-1 family. Highly divergent. Forms a 1:1:1 heterotrimeric complex with its primary high-affinity receptor IL1RL1 and the coreceptor IL1RAP. Interacts with cargo receptor TMED10; the interaction mediates the translocation from the cytoplasm into the ERGIC (endoplasmic reticulum-Golgi intermediate compartment) and thereby secretion. In terms of processing, the full-length protein can be released from cells and is able to signal via the IL1RL1/ST2 receptor. However, proteolytic processing by CELA1, CSTG/cathepsin G and ELANE/neutrophil elastase produces C-terminal peptides that are more active than the unprocessed full-length protein. May also be proteolytically processed by calpains. Proteolytic cleavage mediated by apoptotic caspases including CASP3 and CASP7 results in IL33 inactivation. In vitro proteolytic cleavage by CASP1 was reported but could not be confirmed in vivo suggesting that IL33 is probably not a direct substrate for that caspase. Expressed in cultured umbilical artery smooth muscle cells after stimulation with IL1A and IL1B, and to a lesser extent with IFNG. Expressed in vasospastic cerebral arteries after subarachnoid hemorrhage.

It localises to the nucleus. Its subcellular location is the chromosome. The protein localises to the cytoplasm. The protein resides in the cytoplasmic vesicle. It is found in the secretory vesicle. It localises to the secreted. Functionally, cytokine that binds to and signals through the IL1RL1/ST2 receptor which in turn activates NF-kappa-B and MAPK signaling pathways in target cells. Involved in the maturation of Th2 cells inducing the secretion of T-helper type 2-associated cytokines. Also involved in activation of mast cells, basophils, eosinophils and natural killer cells. Acts as a chemoattractant for Th2 cells, and may function as an 'alarmin', that amplifies immune responses during tissue injury. Induces rapid UCP2-dependent mitochondrial rewiring that attenuates the generation of reactive oxygen species and preserves the integrity of Krebs cycle required for persistent production of itaconate and subsequent GATA3-dependent differentiation of inflammation-resolving alternatively activated macrophages. In quiescent endothelia the uncleaved form is constitutively and abundantly expressed, and acts as a chromatin-associated nuclear factor with transcriptional repressor properties, it may sequester nuclear NF-kappaB/RELA, lowering expression of its targets. This form is rapidely lost upon angiogenic or pro-inflammatory activation. The protein is Interleukin-33 (IL33) of Canis lupus familiaris (Dog).